The sequence spans 5087 residues: Nonribosomal peptide synthetase sidC (5087 aa).

Residues 165 to 563 form an adenylation 1 region; sequence HEMVRHTGNE…NGELQCMGRI (399 aa). A Carrier 1 domain is found at 671 to 744; the sequence is EPAGDIEQKI…KMAALVLKSQ (74 aa). Ser-705 carries the O-(pantetheine 4'-phosphoryl)serine modification. The segment at 782 to 1112 is condensation 1; it reads DIIPCSPIQT…LFDTLFVWQD (331 aa). Residues 1217-1611 form an adenylation 2 region; that stretch reads ELAKTDSERI…GRRDDLVKIR (395 aa). The region spanning 1740–1817 is the Carrier 2 domain; sequence ENLTDNEAKV…RLTRKISQSI (78 aa). An O-(pantetheine 4'-phosphoryl)serine modification is found at Ser-1777. The condensation 2 stretch occupies residues 1855–2272; that stretch reads KILPCTSLQE…RVMDFSLVES (418 aa). The region spanning 2302–2378 is the Carrier 3 domain; that stretch reads EEWSAESLEI…EIASVLQGSK (77 aa). O-(pantetheine 4'-phosphoryl)serine is present on Ser-2339. The tract at residues 2419–2831 is condensation 3; it reads PCTTPQAGML…STSSSLDTAS (413 aa). Residues 2860-3258 are adenylation 3; the sequence is ATRHPSRVAL…GRIDDQVKLR (399 aa). One can recognise a Carrier 4 domain in the interval 3387–3464; the sequence is TEDTDTIRKI…LLAKAVESPD (78 aa). O-(pantetheine 4'-phosphoryl)serine is present on Ser-3424. The segment at 3506-3910 is condensation 4; it reads ITPCTSLQDG…RSLVEEPFSN (405 aa). In terms of domain architecture, Carrier 5 spans 3943–4019; sequence FQWSQAASLL…TMMAEVTVNG (77 aa). Ser-3980 carries the post-translational modification O-(pantetheine 4'-phosphoryl)serine. The segment at 4051-4416 is condensation 5; that stretch reads EHIYPATPLQ…EYSICVELEA (366 aa). The Carrier 6 domain maps to 4496–4569; sequence SLLEERIRDT…KMAEIVNSAR (74 aa). The residue at position 4530 (Ser-4530) is an O-(pantetheine 4'-phosphoryl)serine. The interval 4610-4913 is condensation 6; the sequence is FLPATAGQVY…IQSDLHEIGS (304 aa). The interval 5013–5048 is disordered; that stretch reads DVYKVSPPGSQLSQDSPEKQEANNKPSPQPSVDIEA.

The protein belongs to the NRP synthetase family.

Its pathway is siderophore biosynthesis. Its function is as follows. Nonribosomal peptide synthetase; part of the siderophore biosynthetic pathway. Arthroderma benhamiae produces 2 types of extracellular siderophores, ferrichrome C and ferricrocin. The biosynthesis of these siderophores depends on the hydroxylation of ornithine to N(5)-hydroxyornithine, catalyzed by the monooxygenase sidA. The structure of ferricrocin differs from ferrichrome C only by a serine for alanine substitution and the assembly of both siderophores is suggested to be performed by the nonribosomal peptide synthase (NRPS) sidC. This Arthroderma benhamiae (strain ATCC MYA-4681 / CBS 112371) (Trichophyton mentagrophytes) protein is Nonribosomal peptide synthetase sidC.